We begin with the raw amino-acid sequence, 237 residues long: Putative N-acetylmuramoyl-L-alanine amidase (237 aa).

Residues 7–225 enclose the MurNAc-LAA domain; it reads ILIDAGHGGY…IANSIYLGLK (219 aa).

It belongs to the N-acetylmuramoyl-L-alanine amidase 3 family.

Its subcellular location is the secreted. The catalysed reaction is Hydrolyzes the link between N-acetylmuramoyl residues and L-amino acid residues in certain cell-wall glycopeptides.. Functionally, cell-wall hydrolase involved in septum cleavage during cell division. This Buchnera aphidicola subsp. Acyrthosiphon pisum (strain APS) (Acyrthosiphon pisum symbiotic bacterium) protein is Putative N-acetylmuramoyl-L-alanine amidase (amiB).